The sequence spans 39 residues: Photosystem II reaction center protein J (39 aa).

The chain crosses the membrane as a helical span at residues 7 to 27 (IPLWLVATIAGLGVIAVLGLF).

It belongs to the PsbJ family. As to quaternary structure, PSII is composed of 1 copy each of membrane proteins PsbA, PsbB, PsbC, PsbD, PsbE, PsbF, PsbH, PsbI, PsbJ, PsbK, PsbL, PsbM, PsbT, PsbX, PsbY, PsbZ, Psb30/Ycf12, peripheral proteins PsbO, CyanoQ (PsbQ), PsbU, PsbV and a large number of cofactors. It forms dimeric complexes.

The protein resides in the cellular thylakoid membrane. Functionally, one of the components of the core complex of photosystem II (PSII). PSII is a light-driven water:plastoquinone oxidoreductase that uses light energy to abstract electrons from H(2)O, generating O(2) and a proton gradient subsequently used for ATP formation. It consists of a core antenna complex that captures photons, and an electron transfer chain that converts photonic excitation into a charge separation. The protein is Photosystem II reaction center protein J of Microcystis aeruginosa (strain NIES-843 / IAM M-2473).